Reading from the N-terminus, the 52-residue chain is uncharacterized protein (52 aa).

This is an uncharacterized protein from Treponema pallidum (strain Nichols).